The sequence spans 307 residues: 4-hydroxy-3-methylbut-2-enyl diphosphate reductase (307 aa).

Position 13 (cysteine 13) interacts with [4Fe-4S] cluster. Residues histidine 42 and histidine 75 each contribute to the (2E)-4-hydroxy-3-methylbut-2-enyl diphosphate site. The dimethylallyl diphosphate site is built by histidine 42 and histidine 75. Isopentenyl diphosphate contacts are provided by histidine 42 and histidine 75. Cysteine 97 provides a ligand contact to [4Fe-4S] cluster. Residue histidine 125 participates in (2E)-4-hydroxy-3-methylbut-2-enyl diphosphate binding. Histidine 125 serves as a coordination point for dimethylallyl diphosphate. Position 125 (histidine 125) interacts with isopentenyl diphosphate. Glutamate 127 functions as the Proton donor in the catalytic mechanism. Threonine 165 is a binding site for (2E)-4-hydroxy-3-methylbut-2-enyl diphosphate. Residue cysteine 195 participates in [4Fe-4S] cluster binding. Residues serine 223, serine 224, asparagine 225, and serine 267 each coordinate (2E)-4-hydroxy-3-methylbut-2-enyl diphosphate. Residues serine 223, serine 224, asparagine 225, and serine 267 each contribute to the dimethylallyl diphosphate site. 4 residues coordinate isopentenyl diphosphate: serine 223, serine 224, asparagine 225, and serine 267.

Belongs to the IspH family. [4Fe-4S] cluster is required as a cofactor.

It carries out the reaction isopentenyl diphosphate + 2 oxidized [2Fe-2S]-[ferredoxin] + H2O = (2E)-4-hydroxy-3-methylbut-2-enyl diphosphate + 2 reduced [2Fe-2S]-[ferredoxin] + 2 H(+). The catalysed reaction is dimethylallyl diphosphate + 2 oxidized [2Fe-2S]-[ferredoxin] + H2O = (2E)-4-hydroxy-3-methylbut-2-enyl diphosphate + 2 reduced [2Fe-2S]-[ferredoxin] + 2 H(+). Its pathway is isoprenoid biosynthesis; dimethylallyl diphosphate biosynthesis; dimethylallyl diphosphate from (2E)-4-hydroxy-3-methylbutenyl diphosphate: step 1/1. It functions in the pathway isoprenoid biosynthesis; isopentenyl diphosphate biosynthesis via DXP pathway; isopentenyl diphosphate from 1-deoxy-D-xylulose 5-phosphate: step 6/6. Functionally, catalyzes the conversion of 1-hydroxy-2-methyl-2-(E)-butenyl 4-diphosphate (HMBPP) into a mixture of isopentenyl diphosphate (IPP) and dimethylallyl diphosphate (DMAPP). Acts in the terminal step of the DOXP/MEP pathway for isoprenoid precursor biosynthesis. This is 4-hydroxy-3-methylbut-2-enyl diphosphate reductase from Chlamydia trachomatis serovar D (strain ATCC VR-885 / DSM 19411 / UW-3/Cx).